The chain runs to 200 residues: Histone chaperone asf1b (200 aa).

This sequence belongs to the ASF1 family. Interacts with histone H3 and histone H4.

It localises to the nucleus. Its function is as follows. Histone chaperone that facilitates histone deposition and histone exchange and removal during nucleosome assembly and disassembly. In Xenopus tropicalis (Western clawed frog), this protein is Histone chaperone asf1b (asf1b).